A 148-amino-acid polypeptide reads, in one-letter code: UPF0179 protein VNG_1401C (148 aa).

This sequence belongs to the UPF0179 family.

The polypeptide is UPF0179 protein VNG_1401C (Halobacterium salinarum (strain ATCC 700922 / JCM 11081 / NRC-1) (Halobacterium halobium)).